We begin with the raw amino-acid sequence, 928 residues long: Nitrogen network kinase 1 (928 aa).

The span at 1 to 12 shows a compositional bias: polar residues; that stretch reads MFTSQRQLRQNG. Disordered regions lie at residues 1 to 43 and 81 to 118; these read MFTS…SYGR and HEHPSRSTLVQLQTRSQPDDVASSQVNPEGGTDDLELG. Over residues 13–29 the composition is skewed to low complexity; it reads SPMSSSRSSQHSSGTAS. 2 stretches are compositionally biased toward polar residues: residues 30–40 and 86–107; these read PISDSPASNRS and RSTLVQLQTRSQPDDVASSQVN. Serine 178 and serine 179 each carry phosphoserine. The interval 374–394 is disordered; sequence ANDDNINSRNTPNNSNDTYVN. Over residues 375–391 the composition is skewed to low complexity; it reads NDDNINSRNTPNNSNDT. Phosphoserine is present on residues serine 405 and serine 426. One can recognise a Protein kinase domain in the interval 449–912; that stretch reads HRLGKIIGFG…WKLKRIEEVL (464 aa). Residues 455-463 and lysine 478 each bind ATP; that span reads IGFGAWGII. The active-site Proton acceptor is aspartate 580. Disordered stretches follow at residues 670–741 and 767–813; these read ENRK…KYIG and YDSP…SGSS. Residues 683-696 show a composition bias toward polar residues; sequence VSSSSHSLKHLNQP. Serine 737 is modified (phosphoserine). Tyrosine 739 is subject to Phosphotyrosine. The span at 769-813 shows a compositional bias: low complexity; that stretch reads SPDSSQSEISAASSSSSNLSSLSSSTKASAVTNSGVTTSSPSGSS.

Belongs to the protein kinase superfamily. Ser/Thr protein kinase family. In terms of assembly, interacts with URE2 and GDH2. Also interacts with the TORC1 kinase complex.

It is found in the cytoplasm. It catalyses the reaction L-seryl-[protein] + ATP = O-phospho-L-seryl-[protein] + ADP + H(+). The catalysed reaction is L-threonyl-[protein] + ATP = O-phospho-L-threonyl-[protein] + ADP + H(+). Serine/threonine-protein kinase involved in the phosphorylation of the NAD(+)-dependent glutamate dehydrogenase GDH2. When overexpressed, confers hypersensitivity to rapamycin and induces rapid nuclear accumulation of GLN3 to activate the transcription of nitrogen-regulated genes. The chain is Nitrogen network kinase 1 (NNK1) from Saccharomyces cerevisiae (strain ATCC 204508 / S288c) (Baker's yeast).